A 262-amino-acid chain; its full sequence is Thiazole synthase (262 aa).

The Schiff-base intermediate with DXP role is filled by Lys-96. 1-deoxy-D-xylulose 5-phosphate contacts are provided by residues Gly-157, 184 to 185 (AG), and 206 to 207 (NT).

Belongs to the ThiG family. As to quaternary structure, homotetramer. Forms heterodimers with either ThiH or ThiS.

Its subcellular location is the cytoplasm. The catalysed reaction is [ThiS sulfur-carrier protein]-C-terminal-Gly-aminoethanethioate + 2-iminoacetate + 1-deoxy-D-xylulose 5-phosphate = [ThiS sulfur-carrier protein]-C-terminal Gly-Gly + 2-[(2R,5Z)-2-carboxy-4-methylthiazol-5(2H)-ylidene]ethyl phosphate + 2 H2O + H(+). The protein operates within cofactor biosynthesis; thiamine diphosphate biosynthesis. Functionally, catalyzes the rearrangement of 1-deoxy-D-xylulose 5-phosphate (DXP) to produce the thiazole phosphate moiety of thiamine. Sulfur is provided by the thiocarboxylate moiety of the carrier protein ThiS. In vitro, sulfur can be provided by H(2)S. The chain is Thiazole synthase from Legionella pneumophila (strain Paris).